We begin with the raw amino-acid sequence, 336 residues long: Pyridoxal 5'-phosphate synthase subunit PdxS (336 aa).

Residue aspartate 64 participates in D-ribose 5-phosphate binding. Lysine 121 (schiff-base intermediate with D-ribose 5-phosphate) is an active-site residue. Residue glycine 193 coordinates D-ribose 5-phosphate. Lysine 205 serves as a coordination point for D-glyceraldehyde 3-phosphate. D-ribose 5-phosphate-binding positions include glycine 254 and glycine 275–serine 276.

This sequence belongs to the PdxS/SNZ family. As to quaternary structure, in the presence of PdxT, forms a dodecamer of heterodimers.

It catalyses the reaction aldehydo-D-ribose 5-phosphate + D-glyceraldehyde 3-phosphate + L-glutamine = pyridoxal 5'-phosphate + L-glutamate + phosphate + 3 H2O + H(+). The protein operates within cofactor biosynthesis; pyridoxal 5'-phosphate biosynthesis. Functionally, catalyzes the formation of pyridoxal 5'-phosphate from ribose 5-phosphate (RBP), glyceraldehyde 3-phosphate (G3P) and ammonia. The ammonia is provided by the PdxT subunit. Can also use ribulose 5-phosphate and dihydroxyacetone phosphate as substrates, resulting from enzyme-catalyzed isomerization of RBP and G3P, respectively. In Pyrobaculum aerophilum (strain ATCC 51768 / DSM 7523 / JCM 9630 / CIP 104966 / NBRC 100827 / IM2), this protein is Pyridoxal 5'-phosphate synthase subunit PdxS.